The following is a 545-amino-acid chain: Membrane protein insertase YidC (545 aa).

The next 6 membrane-spanning stretches (helical) occupy residues 10-30 (AVYL…FLFS), 319-339 (LLYF…NVIP), 341-361 (WGLS…PLTF), 407-427 (IGGC…YGLV), 467-487 (ILPF…SNVS), and 502-522 (MPIM…IYWI).

This sequence belongs to the OXA1/ALB3/YidC family. Type 1 subfamily. As to quaternary structure, interacts with the Sec translocase complex via SecD. Specifically interacts with transmembrane segments of nascent integral membrane proteins during membrane integration.

Its subcellular location is the cell inner membrane. In terms of biological role, required for the insertion and/or proper folding and/or complex formation of integral membrane proteins into the membrane. Involved in integration of membrane proteins that insert both dependently and independently of the Sec translocase complex, as well as at least some lipoproteins. Aids folding of multispanning membrane proteins. The polypeptide is Membrane protein insertase YidC (Borrelia recurrentis (strain A1)).